A 266-amino-acid chain; its full sequence is Glutamate racemase (266 aa).

Residues D9 to S10 and Y41 to G42 contribute to the substrate site. C72 acts as the Proton donor/acceptor in catalysis. Position 73-74 (N73–T74) interacts with substrate. C183 functions as the Proton donor/acceptor in the catalytic mechanism. T184–H185 contributes to the substrate binding site.

It belongs to the aspartate/glutamate racemases family.

It catalyses the reaction L-glutamate = D-glutamate. The protein operates within cell wall biogenesis; peptidoglycan biosynthesis. Functionally, provides the (R)-glutamate required for cell wall biosynthesis. This Listeria innocua serovar 6a (strain ATCC BAA-680 / CLIP 11262) protein is Glutamate racemase.